The sequence spans 277 residues: Pantothenate synthetase (277 aa).

An ATP-binding site is contributed by 26–33 (MGNLHEGH). The Proton donor role is filled by histidine 33. Residue glutamine 57 coordinates (R)-pantoate. Glutamine 57 is a binding site for beta-alanine. An ATP-binding site is contributed by 144–147 (GKKD). Position 150 (glutamine 150) interacts with (R)-pantoate. ATP contacts are provided by residues valine 173 and 181 to 184 (LSSR).

The protein belongs to the pantothenate synthetase family. In terms of assembly, homodimer.

The protein localises to the cytoplasm. It catalyses the reaction (R)-pantoate + beta-alanine + ATP = (R)-pantothenate + AMP + diphosphate + H(+). Its pathway is cofactor biosynthesis; (R)-pantothenate biosynthesis; (R)-pantothenate from (R)-pantoate and beta-alanine: step 1/1. In terms of biological role, catalyzes the condensation of pantoate with beta-alanine in an ATP-dependent reaction via a pantoyl-adenylate intermediate. The chain is Pantothenate synthetase from Paraburkholderia xenovorans (strain LB400).